Reading from the N-terminus, the 240-residue chain is Pyridoxine 5'-phosphate synthase (240 aa).

Asparagine 6 serves as a coordination point for 3-amino-2-oxopropyl phosphate. Residue 8 to 9 (DH) coordinates 1-deoxy-D-xylulose 5-phosphate. A 3-amino-2-oxopropyl phosphate-binding site is contributed by arginine 17. Residue histidine 42 is the Proton acceptor of the active site. Positions 44 and 49 each coordinate 1-deoxy-D-xylulose 5-phosphate. Glutamate 69 (proton acceptor) is an active-site residue. Threonine 99 is a 1-deoxy-D-xylulose 5-phosphate binding site. The Proton donor role is filled by histidine 193. Residues glycine 194 and 216-217 (GH) each bind 3-amino-2-oxopropyl phosphate.

Belongs to the PNP synthase family. As to quaternary structure, homooctamer; tetramer of dimers.

It localises to the cytoplasm. The catalysed reaction is 3-amino-2-oxopropyl phosphate + 1-deoxy-D-xylulose 5-phosphate = pyridoxine 5'-phosphate + phosphate + 2 H2O + H(+). It participates in cofactor biosynthesis; pyridoxine 5'-phosphate biosynthesis; pyridoxine 5'-phosphate from D-erythrose 4-phosphate: step 5/5. Functionally, catalyzes the complicated ring closure reaction between the two acyclic compounds 1-deoxy-D-xylulose-5-phosphate (DXP) and 3-amino-2-oxopropyl phosphate (1-amino-acetone-3-phosphate or AAP) to form pyridoxine 5'-phosphate (PNP) and inorganic phosphate. This is Pyridoxine 5'-phosphate synthase from Hydrogenobaculum sp. (strain Y04AAS1).